The sequence spans 103 residues: Integration host factor subunit beta (103 aa).

The protein belongs to the bacterial histone-like protein family. As to quaternary structure, heterodimer of an alpha and a beta chain.

Functionally, this protein is one of the two subunits of integration host factor, a specific DNA-binding protein that functions in genetic recombination as well as in transcriptional and translational control. This chain is Integration host factor subunit beta, found in Rhizobium meliloti (strain 1021) (Ensifer meliloti).